The following is a 293-amino-acid chain: Ribosomal protein L11 methyltransferase (293 aa).

T145, G166, D188, and N230 together coordinate S-adenosyl-L-methionine.

Belongs to the methyltransferase superfamily. PrmA family.

Its subcellular location is the cytoplasm. The enzyme catalyses L-lysyl-[protein] + 3 S-adenosyl-L-methionine = N(6),N(6),N(6)-trimethyl-L-lysyl-[protein] + 3 S-adenosyl-L-homocysteine + 3 H(+). Methylates ribosomal protein L11. This chain is Ribosomal protein L11 methyltransferase, found in Klebsiella pneumoniae (strain 342).